Reading from the N-terminus, the 445-residue chain is MVLEGNPDVGSPRTSDLQHPGSQGSCILSCPGEEALAGEEPIKYGELIVLGYNGCLASGDKGRRRSRLALSRRPHANGVKPDVMHHISTPLVSKALSNRGQHSISFTLSRSHSVIVEYTHDSDKDMFQIGRSTENMIDFVVTDTSPGGGATEGPSAQSTISRYACRILCDRRPPYTARIYAAGFDASSNIFLGERAAKWRTPDGLMDGLTTNGVLVMHPAGGFSEDSAPGVWREISVCGNVYTLRDSRSAQQRGKLVENESNVLQDGSLIDLCGATLLWRTPAGLLRAPTLKQLEAQRQEANAARPQCPVGLSTLAFPSPARGRTAPDKQQPWVYVRCGHVHGYHGWGCRRERGPQERECPLCRLVGPYVPLWLGQEAGLCLDPGPPSHAFAPCGHVCSEKTARYWAQTPLPHGTHAFHAACPFCGAWLTGELGCVRLIFQGPLD.

The tract at residues 1–24 is disordered; it reads MVLEGNPDVGSPRTSDLQHPGSQG. A Phosphoserine modification is found at serine 11. The span at 12 to 24 shows a compositional bias: polar residues; the sequence is PRTSDLQHPGSQG.

This sequence belongs to the pellino family. Interacts with TRAF6, MAP3K14 and MAP3K7. Post-translationally, phosphorylated by IRAK1 enhancing its E3 ligase activity.

The enzyme catalyses S-ubiquitinyl-[E2 ubiquitin-conjugating enzyme]-L-cysteine + [acceptor protein]-L-lysine = [E2 ubiquitin-conjugating enzyme]-L-cysteine + N(6)-ubiquitinyl-[acceptor protein]-L-lysine.. The protein operates within protein modification; protein ubiquitination. Functionally, E3 ubiquitin ligase catalyzing the covalent attachment of ubiquitin moieties onto substrate proteins. Involved in the TLR and IL-1 signaling pathways via interaction with the complex containing IRAK kinases and TRAF6. Mediates 'Lys-63'-linked polyubiquitination of IRAK1. Can activate AP1/JUN and ELK1. Acts as a regulator of innate immunity by mediating 'Lys-63'-linked polyubiquitination of RIPK2 downstream of NOD1 and NOD2, thereby transforming RIPK2 into a scaffolding protein for downstream effectors, ultimately leading to activation of the NF-kappa-B and MAP kinases signaling. Catalyzes 'Lys-63'-linked polyubiquitination of RIPK2 in parallel of XIAP. The protein is E3 ubiquitin-protein ligase pellino homolog 3 of Mus musculus (Mouse).